The primary structure comprises 144 residues: Large ribosomal subunit protein uL15 (144 aa).

The tract at residues 1–62 (MELNNLKPAE…GQMPLQRRLP (62 aa)) is disordered. Over residues 21 to 31 (RGIGSGLGKTA) the composition is skewed to gly residues.

Belongs to the universal ribosomal protein uL15 family. Part of the 50S ribosomal subunit.

In terms of biological role, binds to the 23S rRNA. The sequence is that of Large ribosomal subunit protein uL15 from Paraburkholderia phymatum (strain DSM 17167 / CIP 108236 / LMG 21445 / STM815) (Burkholderia phymatum).